Here is a 118-residue protein sequence, read N- to C-terminus: UPF0125 protein RSc1426 (118 aa).

Belongs to the UPF0125 (RnfH) family.

This chain is UPF0125 protein RSc1426, found in Ralstonia nicotianae (strain ATCC BAA-1114 / GMI1000) (Ralstonia solanacearum).